The chain runs to 940 residues: Antiviral innate immune response receptor RIG-I (940 aa).

2 CARD domains span residues 1–87 and 92–172; these read MTAE…GLCE and WDFQ…KTLK. Residues Lys48, Lys96, Lys154, Lys164, Lys172, and Lys190 each participate in a glycyl lysine isopeptide (Lys-Gly) (interchain with G-Cter in ubiquitin) cross-link. The interaction with ZC3HAV1 stretch occupies residues 219-928; it reads ENQNLSQNSC…LSFDAAEMAG (710 aa). The 180-residue stretch at 249-428 folds into the Helicase ATP-binding domain; it reads ALPAQNGKNT…AEATEYICKL (180 aa). 262-269 contacts ATP; that stretch reads APTGCGKT. The DECH box signature appears at 370 to 373; it reads DECH. The 167-residue stretch at 613-779 folds into the Helicase C-terminal domain; it reads KLRDLCFILQ…ILQTWDEAVF (167 aa). Residues 738 to 928 form a mediates interaction with RNF135 region; it reads GSKCFLLTAN…LSFDAAEMAG (191 aa). At Thr773 the chain carries Phosphothreonine; by CK2. The 134-residue stretch at 795–928 folds into the RLR CTR domain; it reads DNQGKPEPVP…LSFDAAEMAG (134 aa). Cys813 lines the Zn(2+) pocket. Lys815 participates in a covalent cross-link: Glycyl lysine isopeptide (Lys-Gly) (interchain with G-Cter in ubiquitin). Residue Cys816 coordinates Zn(2+). N6-acetyllysine is present on Lys861. Zn(2+)-binding residues include Cys867 and Cys872. Lys912 is subject to N6-acetyllysine.

This sequence belongs to the helicase family. RLR subfamily. As to quaternary structure, monomer; maintained as a monomer in an autoinhibited state. Upon binding of viral RNAs and conformational shift, homooligomerizes and forms filaments on these molecules. Interacts (via tandem CARD domain) with MAVS/IPS1 promoting its filamentation. Interacts with DHX58/LGP2, IKBKE, TBK1 and STING1. Interacts (via CARD domain) with TRIM25 (via SPRY domain). Interacts (double-stranded RNA-bound oligomeric form) with RNF135 (homodimer); involved in RNA length-dependent activation of the RIG-I signaling pathway. Interacts with CYLD. Interacts with NLRC5; blocks the interaction of MAVS/IPS1 to RIGI. Interacts with SRC. Interacts with DDX60. Interacts with ZC3HAV1 (via zinc-fingers) in an RNA-dependent manner. Interacts (via tandem CARD domain) with SEC14L1; the interaction is direct and impairs the interaction of RIGI with MAVS/IPS1. Interacts with VCP/p97; interaction is direct and allows the recruitment of RNF125 and subsequent ubiquitination and degradation. Interacts with NOP53; may regulate RIGI through USP15-mediated 'Lys-63'-linked deubiquitination. Interacts with SIGLEC10, CBL and PTPN11; within a negative feedback loop leading to RIGI degradation. Interacts with LRRC25. Interacts with ZCCHC3; leading to activation of RIGI. Interacts with RNF123. Interacts with UBE2D3 and UBE2N; E2 ubiquitin ligases involved in RNF135-mediated ubiquitination of RIGI and activation of the RIG-I signaling pathway. Interacts with IFIT3. Interacts with DDX3X. Interacts with RTN3. Interacts with ARL16; this interaction is GTP-dependent and induced upon viral infection; this interaction suppresses the RNA sensing activity of RIGI. Interacts with DHX16; this interaction enhances RIGI-mediated antiviral response. Interacts with IRGM; promoting RIGI degradation. Interacts with IFI6; this interaction inhibits RIGI activation. Interacts with ECSIT; this interaction bridges RIGI to the MAVS complex at the mitochondrion. Interacts with YWHAE; this interaction drives RIGI at the mitochondrion. In terms of processing, phosphorylated in resting cells and dephosphorylated in RNA virus-infected cells. Phosphorylation at Thr-773 results in inhibition of its activity while dephosphorylation at these sites results in its activation. Post-translationally, ISGylated. Conjugated to ubiquitin-like protein ISG15 upon IFN-beta stimulation. ISGylation negatively regulates its function in antiviral signaling response. Sumoylated, probably by MUL1; inhibiting its polyubiquitination. In terms of processing, acetylated in response to RNA virus infection. Deacetylated by HDAC6 in the presence of viral mRNAs which is required for detection of viral RNA by RIGI. Post-translationally, ubiquitinated. 'Lys-63' ubiquitination by RNF135, which occurs after RNA-binding and homodimerization, releases the autoinhibition of the CARD domains by the RLR CTR domain, an essential step in the activation of the RIG-I signaling pathway. Also ubiquitinated by TRIM4. Also undergoes 'Lys-48' ubiquitination by RNF125 that leads to proteasomal degradation. 'Lys-48' ubiquitination follows viral infection and is enhanced by 'Lys-63'-linked ubiquitination of the CARD domains that promotes interaction with VCP/p97 and subsequent recruitment of RNF125. Within a negative feedback loop involving SIGLEC10 and PTPN11, 'Lys-48' ubiquitination at Lys-815 by CBL also elicits the proteasomal degradation of RIGI. Deubiquitinated by CYLD, a protease that selectively cleaves 'Lys-63'-linked ubiquitin chains. Also probably deubiquitinated by USP17L2/USP17 that cleaves 'Lys-48'- and 'Lys-63'-linked ubiquitin chains and positively regulates the receptor. Ubiquitinated by TRIM40 via 'Lys-48'-linked ubiquitination; leading to proteasomal degradation. Deubiquitinated by USP27X that cleaves 'Lys-63'-linked ubiquitin chains and inhibits the innate immune receptor activity. Deubiquitinated by USP3 that also cleaves 'Lys-63'-linked ubiquitin chains and inhibits the innate immune receptor activity. Degraded via selective autophagy following interaction with IRGM. IRGM promotes RIGI recruitment to autophagosome membranes, promoting its SQSTM1/p62-dependent autophagic degradation. As to expression, ubiquitously expressed, with highest levels in spleen, liver, intestine and heart. Up-regulated in tracheobronchial lymph node and tonsils during porcine reproductive and respiratory syndrome virus (PRRSV) infection.

The protein resides in the cytoplasm. Its subcellular location is the cell projection. It is found in the ruffle membrane. The protein localises to the cytoskeleton. It localises to the cell junction. The protein resides in the tight junction. The catalysed reaction is ATP + H2O = ADP + phosphate + H(+). Its function is as follows. Innate immune receptor that senses cytoplasmic viral nucleic acids and activates a downstream signaling cascade leading to the production of type I interferons and pro-inflammatory cytokines. Forms a ribonucleoprotein complex with viral RNAs on which it homooligomerizes to form filaments. The homooligomerization allows the recruitment of RNF135 an E3 ubiquitin-protein ligase that activates and amplifies the RIG-I-mediated antiviral signaling in an RNA length-dependent manner through ubiquitination-dependent and -independent mechanisms. Upon activation, associates with mitochondria antiviral signaling protein (MAVS/IPS1) that activates the IKK-related kinases TBK1 and IKBKE which in turn phosphorylate the interferon regulatory factors IRF3 and IRF7, activating transcription of antiviral immunological genes including the IFN-alpha and IFN-beta interferons. Ligands include: 5'-triphosphorylated ssRNA and dsRNA and short dsRNA (&lt;1 kb in length). In addition to the 5'-triphosphate moiety, blunt-end base pairing at the 5'-end of the RNA is very essential. Overhangs at the non-triphosphorylated end of the dsRNA RNA have no major impact on its activity. A 3'overhang at the 5'triphosphate end decreases and any 5'overhang at the 5' triphosphate end abolishes its activity. Detects both positive and negative strand RNA viruses including members of the families Paramyxoviridae, Rhabdoviridae: vesicular stomatitis virus (VSV) Orthomyxoviridae: influenza A and B virus, Flaviviridae: Japanese encephalitis virus (JEV). It also detects rotavirus and reovirus. Also involved in antiviral signaling in response to viruses containing a dsDNA genome. Detects dsRNA produced from non-self dsDNA by RNA polymerase III. May play important roles in granulocyte production and differentiation, bacterial phagocytosis and in the regulation of cell migration. The sequence is that of Antiviral innate immune response receptor RIG-I from Sus scrofa (Pig).